A 353-amino-acid polypeptide reads, in one-letter code: MVDTHKLADDVLQLLDNRIEDNYRVCVILVGSPGSGKSTIAEELCQIINEKYHTFLSEHPNVIEVNDRLKPMVNLVDSLKTLQPNEVAEMIENQGLFKDHVEDVNFQPIKYSALTSNNEECTAVVARGGTANAIRIATVDNPVNVNKLAQDSINIAQIVPMDGFHLSRRCLDLFKDPQTAHKRRGSPSTFDSNNFLQLCKILAKTSLCKVSSHHKFYSTSSVFEKLSKTFSQKIPDIFVPGFNHALKDPTPDQYCISKFTRIVILEGLYLLYDQENWKKIYKTLADTGALLVYKIDIDYEATEERVAKRHLQSGLVTTIAEGREKFRSNDLLNGRDIDNHLIKVDNIVHIRND.

Residue 31–39 (GSPGSGKST) coordinates ATP.

This sequence belongs to the YFH7 family.

Its function is as follows. ATP-dependent kinase that could be involved in endoplasmic reticulum membrane assembly. This Saccharomyces cerevisiae (strain JAY291) (Baker's yeast) protein is ATP-dependent kinase YFH7 (YFH7).